The primary structure comprises 475 residues: tRNA-2-methylthio-N(6)-dimethylallyladenosine synthase (475 aa).

The disordered stretch occupies residues 1–21; sequence MTTAPTSPALPASSDTAPTGP. The 122-residue stretch at 24–145 folds into the MTTase N-terminal domain; that stretch reads RGLHVITWGC…LPEMVARAAR (122 aa). [4Fe-4S] cluster-binding residues include C33, C69, C108, C186, C190, and C193. The region spanning 172–404 is the Radical SAM core domain; sequence TQGNLTAFLT…QALLREQQDA (233 aa). Positions 407 to 469 constitute a TRAM domain; sequence ADMVGTVQEI…TNSLGGTLIR (63 aa).

The protein belongs to the methylthiotransferase family. MiaB subfamily. As to quaternary structure, monomer. [4Fe-4S] cluster is required as a cofactor.

It localises to the cytoplasm. It carries out the reaction N(6)-dimethylallyladenosine(37) in tRNA + (sulfur carrier)-SH + AH2 + 2 S-adenosyl-L-methionine = 2-methylsulfanyl-N(6)-dimethylallyladenosine(37) in tRNA + (sulfur carrier)-H + 5'-deoxyadenosine + L-methionine + A + S-adenosyl-L-homocysteine + 2 H(+). Catalyzes the methylthiolation of N6-(dimethylallyl)adenosine (i(6)A), leading to the formation of 2-methylthio-N6-(dimethylallyl)adenosine (ms(2)i(6)A) at position 37 in tRNAs that read codons beginning with uridine. The polypeptide is tRNA-2-methylthio-N(6)-dimethylallyladenosine synthase (Gluconobacter oxydans (strain 621H) (Gluconobacter suboxydans)).